The following is a 321-amino-acid chain: Epoxyqueuosine reductase (321 aa).

The active-site Proton donor is the D137. The 4Fe-4S ferredoxin-type domain maps to 179-211 (EPLNADPPARSLCGRCSACIDACPTHAIREPFV). [4Fe-4S] cluster-binding residues include C191, C194, C197, C201, C217, C245, C248, and C252.

Belongs to the QueG family. In terms of assembly, monomer. Cob(II)alamin is required as a cofactor. The cofactor is [4Fe-4S] cluster.

Its subcellular location is the cytoplasm. The enzyme catalyses epoxyqueuosine(34) in tRNA + AH2 = queuosine(34) in tRNA + A + H2O. The protein operates within tRNA modification; tRNA-queuosine biosynthesis. Its function is as follows. Catalyzes the conversion of epoxyqueuosine (oQ) to queuosine (Q), which is a hypermodified base found in the wobble positions of tRNA(Asp), tRNA(Asn), tRNA(His) and tRNA(Tyr). This Synechococcus sp. (strain CC9605) protein is Epoxyqueuosine reductase.